A 405-amino-acid chain; its full sequence is MLIVQKYGGTSMGSIERIHNVAQRVLESVKLGHQVVVVVSAMSGETDRLLEFGKNFSHNPNKREMDRIVSAGEWISSAALSMALERYGHRAISLSGKEAGILTSSHFQNAVIQSIDTQRITELLEKNYIVVIAGFQGADIQGETTTLGRGGSDLSAVALAGALKAHLCEIYTDVDGVYTTDPRIEEKAQKIAQISYDEMLELASMGAKVLLNRSVELAKKLSVKLVTRNSFNHSEGTLIVAEKDFKGERMETPIVSGIALDKNQARVSMEGVEDRPGIAAEIFGALAEYRINVDMIVQTIGRDGKTDLDFTIVKTQIEETKQALKPFLAQMDSIDYDENIAKVSIVGVGMKSHSGVASIAFKALAKDNINIMMISTSEIKISVLIDIKYAELAVRTLHAVYQLDQ.

ACT domains follow at residues 267-344 (VSME…AKVS) and 345-405 (IVGV…QLDQ).

This sequence belongs to the aspartokinase family.

The catalysed reaction is L-aspartate + ATP = 4-phospho-L-aspartate + ADP. The protein operates within amino-acid biosynthesis; L-lysine biosynthesis via DAP pathway; (S)-tetrahydrodipicolinate from L-aspartate: step 1/4. Its pathway is amino-acid biosynthesis; L-methionine biosynthesis via de novo pathway; L-homoserine from L-aspartate: step 1/3. It participates in amino-acid biosynthesis; L-threonine biosynthesis; L-threonine from L-aspartate: step 1/5. The sequence is that of Aspartokinase (lysC) from Helicobacter pylori (strain J99 / ATCC 700824) (Campylobacter pylori J99).